The primary structure comprises 749 residues: MRAVLLFVVSLAALRMARPEIDDTTLVTMDIKQRQLVILKLLNHVVEPLMYKDLEELGKNFKIEENTDLFTKTDVLKDFIKMRKVGFLPRGEIFTLHVDRQLKEVVTMFHMLYYAKDFTTFVKTACWMRLYLNEGMFVYALTVAVRHREDCKGIILPPPYEIYPYYFVRADVIQKAYLLKMKKGLLDLKLCDFYGIKKTDKDVFIIDENVYDKRVHLNKEDKLRYFTEDIDLNTYYFYFHVDYPFWMKDKFMDKMKMRRFELTYIMYQQILARYILERLSNGMGMIKDLSWHKTIKKGYWPWMKLHNGVEIPVRFDNYVIVRDHNRDVIRLCDEYERIIRDAIIKGFIEINGMRLELTKTDDIETLGKLIFGKIDKVDLDKTLVDSYRYLLIVMKAALGLNTFHSDKYFVVPSILDQYQTALRDPVFYMLQKRIIDLVHLFKLRLPSYTKEDLYFPGVKIDNVVVDKLVTYFDDYLMDMTNAVYLTEDEIKKTKSDMVFMVRKRRLNHQPFKVTLDILSDKSVDCVVRVFLGPKKDNLNRLIDINRNRLNFVELDTFLYKLNTGKNTIVRNSYDMHNLVKDRMMTRDFMKKVESITDMRDLMIKDLRNYHTGFPTRLLLPKGFVGGMHMMLYVIVTPLRLVDNVDINILDINRKDLMRDFRSTVLLDKMPLGFPFDRRIDVGNFFTPNMKFVEVTIFHKRMTCDMKTRWNRWVLKDYDMVDRTRIESDSYFVDTDLDMKVNRNVNLIDV.

Residues 1–14 (MRAVLLFVVSLAAL) form the signal peptide.

This sequence belongs to the hemocyanin family. As to expression, fat body, and hemolymph of larvae.

The sequence is that of Basic juvenile hormone-suppressible protein 2 (BJSP-2) from Trichoplusia ni (Cabbage looper).